We begin with the raw amino-acid sequence, 119 residues long: DNA-directed RNA polymerase subunit omega (119 aa).

This sequence belongs to the RNA polymerase subunit omega family. In terms of assembly, the RNAP catalytic core consists of 2 alpha, 1 beta, 1 beta' and 1 omega subunit. When a sigma factor is associated with the core the holoenzyme is formed, which can initiate transcription.

It catalyses the reaction RNA(n) + a ribonucleoside 5'-triphosphate = RNA(n+1) + diphosphate. Promotes RNA polymerase assembly. Latches the N- and C-terminal regions of the beta' subunit thereby facilitating its interaction with the beta and alpha subunits. This Caulobacter vibrioides (strain ATCC 19089 / CIP 103742 / CB 15) (Caulobacter crescentus) protein is DNA-directed RNA polymerase subunit omega (rpoZ).